The sequence spans 178 residues: uncharacterized protein (178 aa).

The signal sequence occupies residues 1–23; the sequence is MTMFKKISVLFFTLILAGCSSWS.

This is an uncharacterized protein from Haemophilus influenzae (strain ATCC 51907 / DSM 11121 / KW20 / Rd).